We begin with the raw amino-acid sequence, 265 residues long: Type II pantothenate kinase (265 aa).

6 to 13 contacts ATP; sequence DAGGTLIK. Glu-70 functions as the Proton acceptor in the catalytic mechanism. Residues Thr-99, 121–125, Tyr-137, and Ser-225 each bind ATP; that span reads GGMIQ.

The protein belongs to the type II pantothenate kinase family. Homodimer.

It is found in the cytoplasm. The enzyme catalyses (R)-pantothenate + ATP = (R)-4'-phosphopantothenate + ADP + H(+). The protein operates within cofactor biosynthesis; coenzyme A biosynthesis; CoA from (R)-pantothenate: step 1/5. Its function is as follows. Catalyzes the phosphorylation of pantothenate (Pan), the first step in CoA biosynthesis. The chain is Type II pantothenate kinase from Staphylococcus epidermidis (strain ATCC 12228 / FDA PCI 1200).